The sequence spans 572 residues: MALTIPRSQYVATYGPTVGDKVRLGDTDLWATIEQDFLTKGDECKFGGGKSVRDGMAQSSTATRDNPNVLDFALTNVMIIDAKLGIIKADIGIRDGRIVGIGQAGNPDTMDNVTPNMIIGASTEVHNGAHLIATAGGIDTHIHWICPQQAQHAIENGITTMIGGGSGPADGTHATTCTPGKFNIERMFQACEALPVNIGFFGKGNCSMLEPLKEQVVAGALGLKIHEDWGATPAVIDAALKVADEMDVQVAIHTDTLNESGFLEDTMKAINGRVIHTFHTEGAGGGHAPDIIKAAMYPNVLPASTNPTRPFTVNTIDEHLDMLMVCHHLDKRVPEDVAFADSRIRPETIAAEDILHDMGVFSIMSSDSQAMGRVGEVVTRTWQTADKMKAQRGALGDEGNDNFRIKRYIAKYTINPAIAHGISQYVGSLEVGKLADIVLWKPQFFGVKPEFVMKKGFISFAKMGDPNASIPTPQPVFYRPMFGANAKANTESAVYFVSQASVDANIKAQYGIQKETLAVKGCRDVGKKDLVHNNATPEITVDPERYEVRVDGEHITCEPATKVPLAQRYFLF.

One can recognise a Urease domain in the interval 136-572; that stretch reads GGIDTHIHWI…VPLAQRYFLF (437 aa). Ni(2+) is bound by residues H141, H143, and K224. K224 bears the N6-carboxylysine mark. H226 serves as a coordination point for substrate. Positions 253 and 279 each coordinate Ni(2+). H327 acts as the Proton donor in catalysis. D367 lines the Ni(2+) pocket.

It belongs to the metallo-dependent hydrolases superfamily. Urease alpha subunit family. In terms of assembly, heterotrimer of UreA (gamma), UreB (beta) and UreC (alpha) subunits. Three heterotrimers associate to form the active enzyme. Ni cation serves as cofactor. Post-translationally, carboxylation allows a single lysine to coordinate two nickel ions.

It is found in the cytoplasm. It catalyses the reaction urea + 2 H2O + H(+) = hydrogencarbonate + 2 NH4(+). It participates in nitrogen metabolism; urea degradation; CO(2) and NH(3) from urea (urease route): step 1/1. The chain is Urease subunit alpha from Actinobacillus pleuropneumoniae serotype 7 (strain AP76).